The sequence spans 127 residues: Glycine cleavage system H protein (127 aa).

Positions 24–106 (TVTVGITDHA…FEGAWIAKIK (83 aa)) constitute a Lipoyl-binding domain. Position 65 is an N6-lipoyllysine (lysine 65).

It belongs to the GcvH family. As to quaternary structure, the glycine cleavage system is composed of four proteins: P, T, L and H. (R)-lipoate serves as cofactor.

Functionally, the glycine cleavage system catalyzes the degradation of glycine. The H protein shuttles the methylamine group of glycine from the P protein to the T protein. This is Glycine cleavage system H protein from Marinomonas sp. (strain MWYL1).